Consider the following 277-residue polypeptide: Putative ankyrin repeat protein L81 (277 aa).

ANK repeat units lie at residues Phe-150–Gln-179 and Gln-183–Gln-215.

The polypeptide is Putative ankyrin repeat protein L81 (Acanthamoeba polyphaga (Amoeba)).